A 363-amino-acid polypeptide reads, in one-letter code: Phosphoribosylformylglycinamidine cyclo-ligase (363 aa).

It belongs to the AIR synthase family.

The protein resides in the cytoplasm. The catalysed reaction is 2-formamido-N(1)-(5-O-phospho-beta-D-ribosyl)acetamidine + ATP = 5-amino-1-(5-phospho-beta-D-ribosyl)imidazole + ADP + phosphate + H(+). It participates in purine metabolism; IMP biosynthesis via de novo pathway; 5-amino-1-(5-phospho-D-ribosyl)imidazole from N(2)-formyl-N(1)-(5-phospho-D-ribosyl)glycinamide: step 2/2. In Bartonella tribocorum (strain CIP 105476 / IBS 506), this protein is Phosphoribosylformylglycinamidine cyclo-ligase.